Consider the following 326-residue polypeptide: Large ribosomal subunit protein uL4 (326 aa).

Residues 1–211 form a large ribosomal subunit protein uL4 region; that stretch reads MASCVVKNWQ…EKLKARWGSG (211 aa). Disordered stretches follow at residues 44 to 76 and 211 to 326; these read ARQG…ARAG and GAAA…EDND. Residues 60–71 show a composition bias toward basic residues; that stretch reads GGRKPWRQKGTG. Residues 212–326 are unknown; it reads AAAAAPTQAD…TAAAEEEDND (115 aa). Over residues 221-238 the composition is skewed to basic and acidic residues; the sequence is DRLEDQAQAAEREARPVE. Low complexity-rich tracts occupy residues 252–279 and 294–312; these read EAQA…QVQE and QGQA…PPAG. Residues 313–326 are compositionally biased toward acidic residues; the sequence is EEAETAAAEEEDND.

It belongs to the universal ribosomal protein uL4 family. In terms of assembly, part of the 50S ribosomal subunit.

In terms of biological role, one of the primary rRNA binding proteins, this protein initially binds near the 5'-end of the 23S rRNA. It is important during the early stages of 50S assembly. It makes multiple contacts with different domains of the 23S rRNA in the assembled 50S subunit and ribosome. Functionally, forms part of the polypeptide exit tunnel. This is Large ribosomal subunit protein uL4 from Synechococcus sp. (strain JA-3-3Ab) (Cyanobacteria bacterium Yellowstone A-Prime).